Consider the following 199-residue polypeptide: Phosphatidylethanolamine N-methyltransferase (199 aa).

The Lumenal portion of the chain corresponds to 1–12; it reads MTRLLGYVDPLD. Positions 13–33 form an intramembrane region, helical; sequence PSFVAAVITITFNPLYWNVVA. Residues 34-45 are Lumenal-facing; the sequence is RWEHKTRKLSRA. A helical membrane pass occupies residues 46-66; that stretch reads FGSPYLACYSLSVTILLLNFL. The Cytoplasmic segment spans residues 67–93; it reads RSHCFTQAMLSQPRMESLDTPAAYSLG. The helical transmembrane segment at 94–114 threads the bilayer; that stretch reads LALLGLGVVLVLSSFFALGFA. Position 98 to 100 (98 to 100) interacts with S-adenosyl-L-methionine; it reads GLG. The Lumenal segment spans residues 115–157; sequence GTFLGDYFGILKEARVTVFPFNILDNPMYWGSTANYLGWAIMH. Residues 158-178 traverse the membrane as a helical segment; that stretch reads ASPTGLLLTVLVALTYIVALL. Topologically, residues 179-199 are cytoplasmic; that stretch reads YEEPFTAEIYRQKASGSHKRS. 180 to 181 provides a ligand contact to S-adenosyl-L-methionine; it reads EE.

It belongs to the class VI-like SAM-binding methyltransferase superfamily. PEMT/PEM2 methyltransferase family. Post-translationally, isoform 2 is N-glycosylated with high-mannose oligosaccharides. Primarily expressed in liver (at protein level).

It is found in the endoplasmic reticulum. Its subcellular location is the endoplasmic reticulum membrane. It localises to the mitochondrion membrane. The catalysed reaction is a 1,2-diacyl-sn-glycero-3-phospho-N-methylethanolamine + S-adenosyl-L-methionine = a 1,2-diacyl-sn-glycero-3-phospho-N,N-dimethylethanolamine + S-adenosyl-L-homocysteine + H(+). The enzyme catalyses a 1,2-diacyl-sn-glycero-3-phospho-N,N-dimethylethanolamine + S-adenosyl-L-methionine = a 1,2-diacyl-sn-glycero-3-phosphocholine + S-adenosyl-L-homocysteine + H(+). It carries out the reaction a 1,2-diacyl-sn-glycero-3-phosphoethanolamine + S-adenosyl-L-methionine = a 1,2-diacyl-sn-glycero-3-phospho-N-methylethanolamine + S-adenosyl-L-homocysteine + H(+). It catalyses the reaction 1,2-di-(9Z-octadecenoyl)-sn-glycero-3-phosphoethanolamine + S-adenosyl-L-methionine = 1,2-di-(9Z-octadecenoyl)-sn-glycero-3-phospho-N-methylethanolamine + S-adenosyl-L-homocysteine + H(+). The catalysed reaction is 1,2-di-(9Z-octadecenoyl)-sn-glycero-3-phospho-N-methylethanolamine + S-adenosyl-L-methionine = 1,2-di-(9Z-octadecenoyl)-sn-glycero-3-phospho-N,N-dimethylethanolamine + S-adenosyl-L-homocysteine + H(+). The enzyme catalyses 1,2-di-(9Z-octadecenoyl)-sn-glycero-3-phospho-N,N-dimethylethanolamine + S-adenosyl-L-methionine = 1,2-di-(9Z-octadecenoyl)-sn-glycero-3-phosphocholine + S-adenosyl-L-homocysteine + H(+). It carries out the reaction 1,2-di-(9Z,12Z-octadecadienoyl)-sn-glycero-3-phosphoethanolamine + S-adenosyl-L-methionine = 1,2-di-(9Z,12Z-octadecadienoyl)-sn-glycero-3-phospho-N-methylethanolamine + S-adenosyl-L-homocysteine + H(+). It catalyses the reaction 1,2-di-(9Z,12Z-octadecadienoyl)-sn-glycero-3-phospho-N-methylethanolamine + S-adenosyl-L-methionine = 1,2-di-(9Z,12Z-octadecadienoyl)-sn-glycero-3-phospho-N,N-dimethylethanolamine + S-adenosyl-L-homocysteine + H(+). The catalysed reaction is 1,2-di-(9Z,12Z-octadecadienoyl)-sn-glycero-3-phospho-N,N-dimethylethanolamine + S-adenosyl-L-methionine = 1,2-di-(9Z,12Z-octadecadienoyl)-sn-glycero-3-phosphocholine + S-adenosyl-L-homocysteine + H(+). The enzyme catalyses 1,2-di-(9Z,12Z,15Z-octadecatrienoyl)-sn-glycero-3-phosphoethanolamine + S-adenosyl-L-methionine = 1,2-di-(9Z,12Z,15Z-octadecatrienoyl)-sn-glycero-3-phospho-N-methylethanolamine + S-adenosyl-L-homocysteine + H(+). It carries out the reaction 1,2-di-(9Z,12Z,15Z-octadecatrienoyl)-sn-glycero-3-phospho-N-methylethanolamine + S-adenosyl-L-methionine = 1,2-di-(9Z,12Z,15Z-octadecatrienoyl)-sn-glycero-3-phospho-N,N-dimethylethanolamine + S-adenosyl-L-homocysteine + H(+). It catalyses the reaction 1,2-di-(9Z,12Z,15Z-octadecatrienoyl)-sn-glycero-3-phospho-N,N-dimethylethanolamine + S-adenosyl-L-methionine = 1,2-di-(9Z,12Z,15Z-octadecatrienoyl)-sn-glycero-3-phosphocholine + S-adenosyl-L-homocysteine + H(+). The catalysed reaction is 1-hexadecanoyl-2-(4Z,7Z,10Z,13Z,16Z,19Z-docosahexaenoyl)-sn-glycero-3-phosphoethanolamine + S-adenosyl-L-methionine = 1-hexadecanoyl-2-(4Z,7Z,10Z,13Z,16Z,19Z-docosahexaenoyl)-sn-glycero-3-phospho-N-methylethanolamine + S-adenosyl-L-homocysteine + H(+). The enzyme catalyses 1-hexadecanoyl-2-(4Z,7Z,10Z,13Z,16Z,19Z-docosahexaenoyl)-sn-glycero-3-phospho-N-methylethanolamine + S-adenosyl-L-methionine = 1-hexadecanoyl-2-(4Z,7Z,10Z,13Z,16Z,19Z-docosahexaenoyl)-sn-glycero-3-phospho-N,N-dimethylethanolamine + S-adenosyl-L-homocysteine + H(+). It carries out the reaction 1-hexadecanoyl-2-(4Z,7Z,10Z,13Z,16Z,19Z-docosahexaenoyl)-sn-glycero-3-phospho-N,N-dimethylethanolamine + S-adenosyl-L-methionine = 1-hexadecanoyl-2-(4Z,7Z,10Z,13Z,16Z,19Z-docosahexaenoyl)-sn-glycero-3-phosphocholine + S-adenosyl-L-homocysteine + H(+). Its pathway is phospholipid metabolism; phosphatidylcholine biosynthesis. With respect to regulation, the first methylation is rate-limiting. Its function is as follows. Catalyzes the three sequential steps of the methylation pathway for the biosynthesis of phosphatidylcholine, a critical and essential component for membrane structure. Uses S-adenosylmethionine (S-adenosyl-L-methionine, SAM or AdoMet) as the methyl group donor for the methylation of phosphatidylethanolamine (1,2-diacyl-sn-glycero-3-phosphoethanolamine, PE) to phosphatidylmonomethylethanolamine (1,2-diacyl-sn-glycero-3-phospho-N-methylethanolamine, PMME), PMME to phosphatidyldimethylethanolamine (1,2-diacyl-sn-glycero-3-phospho-N,N-dimethylethanolamine, PDME), and PDME to phosphatidylcholine (1,2-diacyl-sn-glycero-3-phosphocholine, PC), producing S-adenosyl-L-homocysteine in each step. Responsible for approximately 30% of hepatic PC with the CDP-choline pathway accounting for the other 70%. Catalyzes the three sequential steps of the methylation of 1,2-diacyl-sn-glycero-3-phospho-N-methylethanolamine (PMME) to 1,2-diacyl-sn-glycero-3-phospho-N,N-dimethylethanolamine (PDME) more efficiently than isoform 2. Induces increase in PC species with longer polyunsaturated chains than isoform 2. Functionally, produces a higher increase in the level of PC species containing long chains with three double bonds than isoform 1. The chain is Phosphatidylethanolamine N-methyltransferase from Homo sapiens (Human).